The sequence spans 348 residues: Probable dual-specificity RNA methyltransferase RlmN (348 aa).

The active-site Proton acceptor is Glu-89. The 234-residue stretch at 95-328 (HKNRNTVCVS…VTLRISYGSK (234 aa)) folds into the Radical SAM core domain. An intrachain disulfide couples Cys-102 to Cys-333. The [4Fe-4S] cluster site is built by Cys-109, Cys-113, and Cys-116. Residues 159–160 (GE), Ser-191, 214–216 (SLH), and Asn-290 contribute to the S-adenosyl-L-methionine site. The active-site S-methylcysteine intermediate is the Cys-333.

The protein belongs to the radical SAM superfamily. RlmN family. [4Fe-4S] cluster serves as cofactor.

It is found in the cytoplasm. The catalysed reaction is adenosine(2503) in 23S rRNA + 2 reduced [2Fe-2S]-[ferredoxin] + 2 S-adenosyl-L-methionine = 2-methyladenosine(2503) in 23S rRNA + 5'-deoxyadenosine + L-methionine + 2 oxidized [2Fe-2S]-[ferredoxin] + S-adenosyl-L-homocysteine. It catalyses the reaction adenosine(37) in tRNA + 2 reduced [2Fe-2S]-[ferredoxin] + 2 S-adenosyl-L-methionine = 2-methyladenosine(37) in tRNA + 5'-deoxyadenosine + L-methionine + 2 oxidized [2Fe-2S]-[ferredoxin] + S-adenosyl-L-homocysteine. Specifically methylates position 2 of adenine 2503 in 23S rRNA and position 2 of adenine 37 in tRNAs. The sequence is that of Probable dual-specificity RNA methyltransferase RlmN from Dictyoglomus turgidum (strain DSM 6724 / Z-1310).